A 396-amino-acid polypeptide reads, in one-letter code: L-lactate dehydrogenase (396 aa).

The 380-residue stretch at 1-380 folds into the FMN hydroxy acid dehydrogenase domain; it reads MIISAASDYR…SGDSLVQELG (380 aa). Tyrosine 24 provides a ligand contact to substrate. 2 residues coordinate FMN: serine 106 and glutamine 127. Tyrosine 129 contributes to the substrate binding site. Threonine 155 contributes to the FMN binding site. Residue arginine 164 coordinates substrate. Lysine 251 lines the FMN pocket. The Proton acceptor role is filled by histidine 275. Arginine 278 lines the substrate pocket. 306–330 is a binding site for FMN; it reads DSGIRNGLDVVRMIALGADTVLLGR.

Belongs to the FMN-dependent alpha-hydroxy acid dehydrogenase family. FMN is required as a cofactor.

It localises to the cell inner membrane. It catalyses the reaction (S)-lactate + A = pyruvate + AH2. Its function is as follows. Catalyzes the conversion of L-lactate to pyruvate. Is coupled to the respiratory chain. The protein is L-lactate dehydrogenase of Salmonella typhimurium (strain LT2 / SGSC1412 / ATCC 700720).